The chain runs to 127 residues: uncharacterized protein (127 aa).

The disordered stretch occupies residues 69 to 94 (GDGGSVPEKGKHGILGAQGQEHPGLN).

This is an uncharacterized protein from Homo sapiens (Human).